The following is a 327-amino-acid chain: Vacuolar protein sorting-associated protein 26A (327 aa).

The segment at 306–327 (RTNFHQRFESPDSQASAEQPEM) is disordered. Residue S315 is modified to Phosphoserine. Residues 316-327 (PDSQASAEQPEM) show a composition bias toward polar residues.

The protein belongs to the VPS26 family. As to quaternary structure, component of the heterotrimeric retromer cargo-selective complex (CSC), also described as vacuolar protein sorting subcomplex (VPS), formed by VPS26 (VPS26A or VPS26B), VPS29 and VPS35. The CSC has a highly elongated structure with VPS26 and VPS29 binding independently at opposite distal ends of VPS35 as central platform. The CSC is believed to associate with variable sorting nexins to form functionally distinct retromer complex variants. The originally described retromer complex (also called SNX-BAR retromer) is a pentamer containing the CSC and a heterodimeric membrane-deforming subcomplex formed between SNX1 or SNX2 and SNX5 or SNX6 (also called SNX-BAR subcomplex); the respective CSC and SNX-BAR subcomplexes associate with low affinity. The CSC associates with SNX3 to form a SNX3-retromer complex. The CSC associates with SNX27, the WASH complex and the SNX-BAR subcomplex to form the SNX27-retromer complex. Interacts with VPS29, VPS35, SNX27. Interacts with SNX1, SNX2, SNX5, SNX6, SNX3, RAB7A, ECPAS, EHD1, WASHC5, SORL1.

The protein localises to the cytoplasm. Its subcellular location is the endosome membrane. It is found in the early endosome. Its function is as follows. Acts as a component of the retromer cargo-selective complex (CSC). The CSC is believed to be the core functional component of retromer or respective retromer complex variants acting to prevent missorting of selected transmembrane cargo proteins into the lysosomal degradation pathway. The recruitment of the CSC to the endosomal membrane involves RAB7A and SNX3. The SNX-BAR retromer mediates retrograde transport of cargo proteins from endosomes to the trans-Golgi network (TGN) and is involved in endosome-to-plasma membrane transport for cargo protein recycling. The SNX3-retromer mediates the retrograde endosome-to-TGN transport of WLS distinct from the SNX-BAR retromer pathway. The SNX27-retromer is believed to be involved in endosome-to-plasma membrane trafficking and recycling of a broad spectrum of cargo proteins. The CSC complex seems to act as recruitment hub for other proteins, such as the WASH complex and TBC1D5. Required for retrograde transport of lysosomal enzyme receptor IGF2R. Required to regulate transcytosis of the polymeric immunoglobulin receptor (pIgR-pIgA). Required for the endosomal localization of WASHC2 (indicative for the WASH complex). Required for the endosomal localization of TBC1D5. Mediates retromer cargo recognition of SORL1 and is involved in trafficking of SORL1 implicated in sorting and processing of APP. Involved in retromer-independent lysosomal sorting of F2R. Involved in recycling of ADRB2. Acts redundantly with VSP26B in SNX-27 mediated endocytic recycling of SLC2A1/GLUT1. Enhances the affinity of SNX27 for PDZ-binding motifs in cargo proteins. The protein is Vacuolar protein sorting-associated protein 26A (Vps26a) of Mus musculus (Mouse).